Reading from the N-terminus, the 560-residue chain is Leiomodin-3 (560 aa).

The interval 1–49 is interaction with tropomyosin alpha; that stretch reads MSEHSRNSDQEELLDEEINEDEILANLSAEELKELQSEMEVMAPDPSLP. A coiled-coil region spans residues 16-42; sequence EEINEDEILANLSAEELKELQSEMEVM. Disordered regions lie at residues 45–68 and 127–217; these read DPSLPVGMIQKDQTDKPPTGNFNH and IVAN…SKLD. Residues 142–167 show a composition bias toward acidic residues; sequence ETDEEDEEEEDDDDDDEGEDDGEESE. The span at 168–182 shows a compositional bias: basic and acidic residues; sequence ETNREEEGKAKEQIR. A compositionally biased stretch (polar residues) spans 183–192; sequence NCENNCQQVT. Positions 194-217 are enriched in basic and acidic residues; sequence KAFKEQRDRPEAQEQSEKKISKLD. A coiled-coil region spans residues 386–425; that stretch reads VTNLLTRNQDKQRQKRQEEQKQQQLKEQKKLIAMLENGLG. Disordered stretches follow at residues 437-480 and 494-530; these read PKPD…KYRT and QRKSRMPEAREPPEKTNLKDVIKTLKPVPRNRPPPLV. Residues 448 to 458 show a composition bias toward pro residues; sequence QPPPPRPPNPQ. The segment covering 498-516 has biased composition (basic and acidic residues); the sequence is RMPEAREPPEKTNLKDVIK. Positions 534 to 553 constitute a WH2 domain; the sequence is PRDQLLNDIRHSSVAYLKPV.

Belongs to the tropomodulin family. As to quaternary structure, may interact with tropomyosin alpha (TPM1/2) N-terminus. Interacts with KLHL40; leading to stabilization. In terms of processing, ubiquitinated, leading to its degradation. Interaction with KLHL40 negatively regulates ubiquitination and degradation. Expressed in cardiac and at higher levels in skeletal muscles (at protein level).

It localises to the cytoplasm. It is found in the myofibril. The protein localises to the sarcomere. The protein resides in the m line. Its subcellular location is the a band. It localises to the cytoskeleton. Functionally, essential for the organization of sarcomeric actin thin filaments in skeletal muscle. Increases the rate of actin polymerization. This Homo sapiens (Human) protein is Leiomodin-3 (LMOD3).